A 164-amino-acid polypeptide reads, in one-letter code: Protein SprT (164 aa).

The SprT-like domain maps to 14–156 (QLAESFFKRP…LCRRCRQTLV (143 aa)). Histidine 69 is a Zn(2+) binding site. Residue glutamate 70 is part of the active site. A Zn(2+)-binding site is contributed by histidine 73.

It belongs to the SprT family. The cofactor is Zn(2+).

It localises to the cytoplasm. The protein is Protein SprT of Pseudomonas fluorescens (strain ATCC BAA-477 / NRRL B-23932 / Pf-5).